A 705-amino-acid chain; its full sequence is MQETVFLFTEENLNKEQSLGVKYKQSSRRVVPMTSCEVSDTAAEIRIVEKVLKNGDLYNGGLSAGVPHGTGKYLWSDGCMYEGEWTRGKASGKGRFSWPSGATYEGQFKDGRMDGEGTFIGIDGDTYRGHWLWGRKHGYGEKRYANGDGYQGNWKANLQDGNGRYVWSDGNEYVGEWKNGVISGKGKMTWANGNRYDGLWENGAPVGKGVLSWGEEKTSYNGWGRKSKKKDEEIVQNHKLSSVETLSANTNFPRICISELEDTGVCDHVEASPYTSESDTSGCGEQEWARSPLLLESGGAMSVQQSPRWLDEGDVKKPGHTVTAGHKNYDLMLNLQLGIRYSVGKHASLLRELRHSDFDPKDKQWTRFPPEGSKSTPPHLSAEFKWKDYCPIVFRHLRDLFAIDQADYMLAICGNESLREFASPGKSGSAFYLTQDERYMIKTMKKSEIKVLLKMLPNYYEHVSKYKNSLVTKFFGVHCVKPVGGQKTRFIVMGNLFCSEYRIHKRFDLKGSSHGRTIDKDEGEIDETTTLKDLDLKYVFRLETSWFQAFINQIDLDCEFLEAERIMDYSLLIGLHFRESGMRDDISLGIGRRDQEDKLMRGNGPLMRLGESTPAKAEQVSRFEEETWEEDAIDNSNPKGTRKEAVEVILYFGVIDILQDYDITKKLEHAYKSLHADPASISAVDPKLYSRRFRDFINKIFIEDK.

MORN repeat units follow at residues 58 to 80 (YNGG…DGCM), 81 to 103 (YEGE…SGAT), 104 to 126 (YEGQ…DGDT), 127 to 149 (YRGH…NGDG), 150 to 172 (YQGN…DGNE), 173 to 195 (YVGE…NGNR), and 196 to 218 (YDGL…EEKT). The PIPK domain occupies 321–701 (TVTAGHKNYD…RFRDFINKIF (381 aa)). The segment at 661-682 (YDITKKLEHAYKSLHADPASIS) is activation loop.

Its subcellular location is the cell membrane. The catalysed reaction is a 1,2-diacyl-sn-glycero-3-phospho-(1D-myo-inositol 4-phosphate) + ATP = a 1,2-diacyl-sn-glycero-3-phospho-(1D-myo-inositol-4,5-bisphosphate) + ADP + H(+). Its function is as follows. With DRP1A and DRP2B, required for the precise coordination of polar ARAC3/ROP6 and ARAC4/ROP2 placement and subsequent root hair positioning during planar polarity formation in root hair-forming cells, probably by mediating the correct basal-to-planar polarity switching of D6PK into the polar, lipid-enriched domain. In Arabidopsis thaliana (Mouse-ear cress), this protein is Phosphatidylinositol 4-phosphate 5-kinase 3.